The following is a 458-amino-acid chain: Probable alpha-L-glutamate ligase (458 aa).

A unknown region spans residues M1–G162. Residues L163–D458 form an alpha-L-glutamate ligase region. The 184-residue stretch at L267–E450 folds into the ATP-grasp domain. Residues K304, E341–F342, D350, and R374–N376 contribute to the ATP site. Residues D411, E423, and N425 each coordinate Mg(2+). Residues D411, E423, and N425 each coordinate Mn(2+).

This sequence in the C-terminal section; belongs to the RimK family. It depends on Mg(2+) as a cofactor. Mn(2+) serves as cofactor.

The chain is Probable alpha-L-glutamate ligase from Shewanella pealeana (strain ATCC 700345 / ANG-SQ1).